A 177-amino-acid chain; its full sequence is Cytoglobin-1 (177 aa).

The region spanning 16–165 is the Globin domain; the sequence is PLTDKERVMI…LCCSIKAVYE (150 aa). 2 residues coordinate heme b: histidine 79 and histidine 111.

Belongs to the globin family. Monomeric.

Its subcellular location is the cytoplasm. It is found in the nucleus. The enzyme catalyses Fe(II)-heme b-[protein] + nitric oxide + O2 = Fe(III)-heme b-[protein] + nitrate. It catalyses the reaction Fe(III)-heme b-[protein] + nitric oxide + H2O = Fe(II)-heme b-[protein] + nitrite + 2 H(+). The catalysed reaction is 2 superoxide + 2 H(+) = H2O2 + O2. It carries out the reaction H2O2 + AH2 = A + 2 H2O. In terms of biological role, probable multifunctional globin with a hexacoordinated heme iron required for the catalysis of various reactions depending on redox condition of the cell as well as oxygen availability. Has a nitric oxide dioxygenase (NOD) activity and is most probably involved in cell-mediated and oxygen-dependent nitric oxide consumption. Under normoxic conditions functions as a nitric oxide dioxygenase (NOD) but under hypoxic conditions the globin may switch its function to that of a nitrite (NO2) reductase (NiR), generating nitric oxide. Could also have peroxidase and superoxide dismutase activities, detoxifying reactive oxygen species and protecting cells against oxidative stress. Also binds dioxygen with low affinity and could function as an oxygen sensor but has probably no function as a respiratory oxygen carrier. The polypeptide is Cytoglobin-1 (Oryzias latipes (Japanese rice fish)).